The chain runs to 1027 residues: Presequence protease, mitochondrial (1027 aa).

The N-terminal 22 residues, 1-22 (MIRQCWAGLRLCRALYQTSYRW), are a transit peptide targeting the mitochondrion. His-98 provides a ligand contact to Zn(2+). The Proton acceptor role is filled by Glu-101. The Zn(2+) site is built by His-102 and Glu-199. An intrachain disulfide couples Cys-113 to Cys-550. A disordered region spans residues 803-827 (RKAIRPHVVEKSSNPSPSGSEISRT). Positions 814–825 (SSNPSPSGSEIS) are enriched in low complexity.

The protein belongs to the peptidase M16 family. PreP subfamily. Monomer and homodimer; homodimerization is induced by binding of the substrate. The cofactor is Zn(2+). Post-translationally, a disulfide bond locks the enzyme in the closed conformation preventing substrate entry into the catalytic chamber.

The protein resides in the mitochondrion matrix. With respect to regulation, mainly exists in a closed and catalytically competent conformation but a closed-to-open switch allows substrate entry into the catalytic chamber. Substrate binding induces closure and dimerization. A disulfide bond may lock the enzyme in a closed conformation preventing substrate entry into the catalytic chamber, participating in redox regulation of the enzyme. Inhibited by metal-chelating agents. Inhibited by nickel and zinc excess, and slightly activated by manganese. Its function is as follows. Metalloendopeptidase of the mitochondrial matrix that functions in peptide cleavage and degradation rather than in protein processing. Has an ATP-independent activity. Specifically cleaves peptides in the range of 5 to 65 residues. Shows a preference for cleavage after small polar residues and before basic residues, but without any positional preference. Degrades the transit peptides of mitochondrial proteins after their cleavage. Also degrades other unstructured peptides. This chain is Presequence protease, mitochondrial (pitrm1), found in Xenopus laevis (African clawed frog).